The chain runs to 188 residues: Phosphoribosylglycinamide formyltransferase (188 aa).

12–14 (GSN) lines the N(1)-(5-phospho-beta-D-ribosyl)glycinamide pocket. (6R)-10-formyltetrahydrofolate contacts are provided by residues Lys66, 91 to 94 (MRLI), and Asn108. His110 serves as the catalytic Proton donor.

Belongs to the GART family.

The catalysed reaction is N(1)-(5-phospho-beta-D-ribosyl)glycinamide + (6R)-10-formyltetrahydrofolate = N(2)-formyl-N(1)-(5-phospho-beta-D-ribosyl)glycinamide + (6S)-5,6,7,8-tetrahydrofolate + H(+). The protein operates within purine metabolism; IMP biosynthesis via de novo pathway; N(2)-formyl-N(1)-(5-phospho-D-ribosyl)glycinamide from N(1)-(5-phospho-D-ribosyl)glycinamide (10-formyl THF route): step 1/1. Its function is as follows. Catalyzes the transfer of a formyl group from 10-formyltetrahydrofolate to 5-phospho-ribosyl-glycinamide (GAR), producing 5-phospho-ribosyl-N-formylglycinamide (FGAR) and tetrahydrofolate. This Staphylococcus aureus (strain Mu50 / ATCC 700699) protein is Phosphoribosylglycinamide formyltransferase.